A 384-amino-acid chain; its full sequence is Dual-specificity RNA methyltransferase RlmN (384 aa).

The active-site Proton acceptor is glutamate 93. The region spanning glutamate 99 to aspartate 339 is the Radical SAM core domain. An intrachain disulfide couples cysteine 106 to cysteine 344. The [4Fe-4S] cluster site is built by cysteine 113, cysteine 117, and cysteine 120. S-adenosyl-L-methionine-binding positions include glycine 170–glutamate 171, serine 202, serine 224–histidine 226, and asparagine 301. The S-methylcysteine intermediate role is filled by cysteine 344.

This sequence belongs to the radical SAM superfamily. RlmN family. Requires [4Fe-4S] cluster as cofactor.

The protein localises to the cytoplasm. It catalyses the reaction adenosine(2503) in 23S rRNA + 2 reduced [2Fe-2S]-[ferredoxin] + 2 S-adenosyl-L-methionine = 2-methyladenosine(2503) in 23S rRNA + 5'-deoxyadenosine + L-methionine + 2 oxidized [2Fe-2S]-[ferredoxin] + S-adenosyl-L-homocysteine. The catalysed reaction is adenosine(37) in tRNA + 2 reduced [2Fe-2S]-[ferredoxin] + 2 S-adenosyl-L-methionine = 2-methyladenosine(37) in tRNA + 5'-deoxyadenosine + L-methionine + 2 oxidized [2Fe-2S]-[ferredoxin] + S-adenosyl-L-homocysteine. In terms of biological role, specifically methylates position 2 of adenine 2503 in 23S rRNA and position 2 of adenine 37 in tRNAs. m2A2503 modification seems to play a crucial role in the proofreading step occurring at the peptidyl transferase center and thus would serve to optimize ribosomal fidelity. This chain is Dual-specificity RNA methyltransferase RlmN, found in Cupriavidus metallidurans (strain ATCC 43123 / DSM 2839 / NBRC 102507 / CH34) (Ralstonia metallidurans).